The primary structure comprises 202 residues: UPF0301 protein mlr7511 (202 aa).

This sequence belongs to the UPF0301 (AlgH) family.

The polypeptide is UPF0301 protein mlr7511 (Mesorhizobium japonicum (strain LMG 29417 / CECT 9101 / MAFF 303099) (Mesorhizobium loti (strain MAFF 303099))).